Here is a 415-residue protein sequence, read N- to C-terminus: MGSLGAILKHPEDFYPLLKLKFAARHAEKQIPPEPHWAFCYSMLHKVSRSFGLVIQQLGPQLRDAVCIFYLVLRALDTVEDDTSIPTEVKVPILMAFHRHIYDKDWHFSCGTKEYKVLMDEFHHVSNAFLELGSGYQEAIEDITMRMGAGMAKFICKEVETINDYDEYCHYVAGLVGLGLSKLFHASGAEDLATDSLSNSMGLFLQKTNIIRDYLEDINEIPKSRMFWPRQIWSKYVDKLEDLKYEENSAKAVQCLNDMVTDALVHAEDCLKYMSDLRGPAIFRFCAIPQIMAIGTLALCFNNTQVFRGVVKMRRGLTAKVIDQTKTMSDVYGAFFDFSCLLKSKVDNNDPNATKTLSRLEAIQKTCKESGTLSKRKSYIIESESGHNSALIAIIFIILAILYAYLSSNLLLNKQ.

2 consecutive transmembrane segments (helical) span residues 281 to 301 (AIFR…ALCF) and 391 to 411 (LIAI…SNLL).

Belongs to the phytoene/squalene synthase family. Requires Mg(2+) as cofactor. Mn(2+) serves as cofactor. As to expression, mostly expressed in the shoot apex (buds) and roots, and, to a lower extent, in stems, leaves, flowers and seeds.

It localises to the endoplasmic reticulum membrane. It carries out the reaction 2 (2E,6E)-farnesyl diphosphate + NADH + H(+) = squalene + 2 diphosphate + NAD(+). It catalyses the reaction 2 (2E,6E)-farnesyl diphosphate + NADPH + H(+) = squalene + 2 diphosphate + NADP(+). It participates in terpene metabolism; lanosterol biosynthesis; lanosterol from farnesyl diphosphate: step 1/3. Functionally, component of the triterpene saponins (e.g. ginsenosides or panaxosides) and phytosterols biosynthetic pathways. Catalyzes the biosynthesis of squalene. In Panax ginseng (Korean ginseng), this protein is Squalene synthase 1.